The following is a 577-amino-acid chain: MGKLIKLITTLTVLVSLLQYCCEFNSGSISCERTQTLCHYTNPRVWNTYFSRNCELYKNKVSPGFDIVARKYDTAVKPVIDDATVKVNKVAIQPAFKVIHSQCKKWNCGKYYQLGRSPMVKTRRFFFAKYNAFVKPNLDKFFTAEFRSHLKERILKYKNIGHYYFTITSRCIKSKYDFTVGNTEEKLMGKFKNKDTHGIHGSVTREPSSEDMVLTVSTMESDEEELTTTSTQTVVETITLDQEEASAVANHAHDDEASTDVEGSTDVNVNEQALLQEDFDMWSETILQKTQDVIQLFEKDVSKYINGKLVEEANHFKAKFQSLDDKSKKFFSKISLAINDIECVEGIDSETGKKIFFDKSGSTEISQYITRELVREYFNETRSTLDELTNAMEKDLSEITDEIEKKVNAIREENVEVFEEWGDIIVNEWSKRMAYVDVINAHMGADDDTTLDEEKAKSSVNWKKFLKGKKQIIESRDKLAHHSADLSRVNAFRQKVQKKILSFTQESGEFLYILRSKANLQFQERERKERERKEREKAAAEEFQRQQELLLQQEEEDEEDVSYTSTSTITTTTTMTL.

An N-terminal signal peptide occupies residues 1 to 23; sequence MGKLIKLITTLTVLVSLLQYCCE. Coiled coils occupy residues 379 to 416 and 513 to 561; these read NETR…ENVE and ILRS…EEDV. The segment covering 525–545 has biased composition (basic and acidic residues); sequence RERKERERKEREKAAAEEFQR. Residues 525 to 577 form a disordered region; it reads RERKERERKEREKAAAEEFQRQQELLLQQEEEDEEDVSYTSTSTITTTTTMTL. The segment covering 562–577 has biased composition (low complexity); sequence SYTSTSTITTTTTMTL.

The protein belongs to the SHE10 family. In terms of assembly, component of the mitochondria-localized RNase mitochondrial RNA-processing (RNase MRP) composed of one single RNA encoded by the NME1 gene and at least 31 proteins. Absent in the nucleus-localized RNase MRP (NuMRP).

The protein resides in the mitochondrion. Involved in spore wall assembly. May be a component of the mitochondrial RNase MRP (MtMRP), a ribonucleoprotein endoribonuclease involved in the cleaving RNA transcripts to generate primers for DNA replication in mitochondria. The polypeptide is Outer spore wall assembly protein SHE10 (Saccharomyces cerevisiae (strain JAY291) (Baker's yeast)).